We begin with the raw amino-acid sequence, 355 residues long: Cytoplasmic tRNA 2-thiolation protein 1 (355 aa).

Residues 320–341 (GIGRPRGVNGDHNKETKKPGSV) are disordered. A compositionally biased stretch (basic and acidic residues) spans 328–337 (NGDHNKETKK).

It belongs to the TtcA family. CTU1/NCS6/ATPBD3 subfamily.

It localises to the cytoplasm. The protein operates within tRNA modification; 5-methoxycarbonylmethyl-2-thiouridine-tRNA biosynthesis. Functionally, plays a central role in 2-thiolation of mcm(5)S(2)U at tRNA wobble positions of tRNA(Lys), tRNA(Glu) and tRNA(Gln). Directly binds tRNAs and probably acts by catalyzing adenylation of tRNAs, an intermediate required for 2-thiolation. It is unclear whether it acts as a sulfurtransferase that transfers sulfur from thiocarboxylated URM1 onto the uridine of tRNAs at wobble position. This Arabidopsis thaliana (Mouse-ear cress) protein is Cytoplasmic tRNA 2-thiolation protein 1.